Consider the following 159-residue polypeptide: Thymic stromal lymphopoietin (159 aa).

A signal peptide spans 1–28 (MFPFALLYVLSVSFRKIFILQLVGLVLT). Disulfide bonds link cysteine 34/cysteine 110, cysteine 69/cysteine 75, and cysteine 90/cysteine 137. The N-linked (GlcNAc...) asparagine glycan is linked to asparagine 64. N-linked (GlcNAc...) asparagine glycosylation occurs at asparagine 119.

As to quaternary structure, interacts with a receptor composed of CRLF2 and IL7R. Binding of TSLP to CRLF2/TSLPR is a mechanistic prerequisite for recruitment of IL7R to the high-affinity ternary complex. As to expression, isoform 1 is expressed in a number of tissues including heart, liver and prostate. Isoform 2 is the predominant form in keratinocytes of oral mucosa, skin and in salivary glands. It is secreted into saliva.

The protein resides in the secreted. In terms of biological role, cytokine that induces the release of T-cell-attracting chemokines from monocytes and, in particular, enhances the maturation of CD11c(+) dendritic cells. Can induce allergic inflammation by directly activating mast cells. Its function is as follows. May act as an antimicrobial peptide in the oral cavity and on the skin. The protein is Thymic stromal lymphopoietin (TSLP) of Homo sapiens (Human).